A 303-amino-acid polypeptide reads, in one-letter code: Probable 5-dehydro-4-deoxyglucarate dehydratase (303 aa).

Belongs to the DapA family.

The catalysed reaction is 5-dehydro-4-deoxy-D-glucarate + H(+) = 2,5-dioxopentanoate + CO2 + H2O. It functions in the pathway carbohydrate acid metabolism; D-glucarate degradation; 2,5-dioxopentanoate from D-glucarate: step 2/2. This Polaromonas naphthalenivorans (strain CJ2) protein is Probable 5-dehydro-4-deoxyglucarate dehydratase.